A 205-amino-acid polypeptide reads, in one-letter code: MSRLNIEQVYKEAQALLEGHFLLSSGNHSNFYLQSAKVLENPKVAESLAKALAEEIRAFGLTIDTVCSPALGGVLAGYELARALGVRFIFTERVEGKMTLRRGFEVASGEKILICEDIITTGGSAVESAMEVERLGAQVVGYAALANRGFCQRVGSSLERKPNAKLPPHLPFFALDDFVFDLYSPQDCPLCKTGSKPIKPGSRGN.

Residue 116–124 (EDIITTGGS) participates in 5-phospho-alpha-D-ribose 1-diphosphate binding. Threonine 120 and arginine 148 together coordinate orotate.

This sequence belongs to the purine/pyrimidine phosphoribosyltransferase family. PyrE subfamily. Homodimer. Requires Mg(2+) as cofactor.

The catalysed reaction is orotidine 5'-phosphate + diphosphate = orotate + 5-phospho-alpha-D-ribose 1-diphosphate. It participates in pyrimidine metabolism; UMP biosynthesis via de novo pathway; UMP from orotate: step 1/2. Catalyzes the transfer of a ribosyl phosphate group from 5-phosphoribose 1-diphosphate to orotate, leading to the formation of orotidine monophosphate (OMP). This Wolinella succinogenes (strain ATCC 29543 / DSM 1740 / CCUG 13145 / JCM 31913 / LMG 7466 / NCTC 11488 / FDC 602W) (Vibrio succinogenes) protein is Orotate phosphoribosyltransferase.